The chain runs to 319 residues: L-lactate dehydrogenase (319 aa).

NAD(+)-binding positions include 10-11, D32, R37, Y62, and 76-77; these read RV and GV. Substrate contacts are provided by residues Q79, R85, and 117–120; that span reads NPVD. Residues 115–117 and S140 contribute to the NAD(+) site; that span reads VTN. 145 to 148 is a substrate binding site; sequence DTAR. Residues R150 and H165 each coordinate beta-D-fructose 1,6-bisphosphate. Residue H172 is the Proton acceptor of the active site. Y217 carries the post-translational modification Phosphotyrosine. T226 is a binding site for substrate.

This sequence belongs to the LDH/MDH superfamily. LDH family. Homotetramer.

It is found in the cytoplasm. It catalyses the reaction (S)-lactate + NAD(+) = pyruvate + NADH + H(+). It participates in fermentation; pyruvate fermentation to lactate; (S)-lactate from pyruvate: step 1/1. Allosterically activated by fructose 1,6-bisphosphate (FBP). Inactivated by Mn(2+), Co(2+), Cd(2+) and Zn(2+). Catalyzes the conversion of lactate to pyruvate. It is stereospecific for L(+)-lactate. The protein is L-lactate dehydrogenase of Thermotoga maritima (strain ATCC 43589 / DSM 3109 / JCM 10099 / NBRC 100826 / MSB8).